We begin with the raw amino-acid sequence, 152 residues long: MATLEQRLTDLLEAPVVALGFELWGIEFIRAGNHSTLRVFIDGENGVTVENCAEVSHQVGAIMDVEDPITEEYFLEVSSPGLDRPLFKVAQFEKYVGQEAAVQLRMATNNRRKFKGVIKAVQGDMITLTVDGKDDVLAFTNIQKANIVPNFG.

Belongs to the RimP family.

The protein localises to the cytoplasm. Functionally, required for maturation of 30S ribosomal subunits. This Aeromonas salmonicida (strain A449) protein is Ribosome maturation factor RimP.